Here is a 370-residue protein sequence, read N- to C-terminus: Serine O-succinyltransferase (370 aa).

Residues 46–355 enclose the AB hydrolase-1 domain; the sequence is AILIVTGLSP…PQGHDAFLVD (310 aa). Residues 52 to 55 are important for substrate specificity; sequence GLSP. The active-site Nucleophile is serine 149. Arginine 218 contributes to the substrate binding site. Active-site residues include aspartate 316 and histidine 349. Position 350 (aspartate 350) interacts with substrate.

The protein belongs to the AB hydrolase superfamily. MetX family. As to quaternary structure, homodimer.

It localises to the cytoplasm. The catalysed reaction is succinyl-CoA + L-serine = O-succinyl-L-serine + CoA. It catalyses the reaction L-homoserine + succinyl-CoA = O-succinyl-L-homoserine + CoA. The protein operates within amino-acid biosynthesis; L-cysteine biosynthesis; L-cysteine from L-serine: step 1/2. Its function is as follows. Transfers a succinyl group from succinyl-CoA to L-serine, forming succinyl-L-serine. In vitro, also has homoserine succinyl transferase activity. The polypeptide is Serine O-succinyltransferase (Stenotrophomonas maltophilia (Pseudomonas maltophilia)).